A 217-amino-acid chain; its full sequence is Adapter protein MecA (217 aa).

The protein belongs to the MecA family. Homodimer.

Functionally, enables the recognition and targeting of unfolded and aggregated proteins to the ClpC protease or to other proteins involved in proteolysis. The protein is Adapter protein MecA of Listeria welshimeri serovar 6b (strain ATCC 35897 / DSM 20650 / CCUG 15529 / CIP 8149 / NCTC 11857 / SLCC 5334 / V8).